The chain runs to 135 residues: uncharacterized protein (135 aa).

This is an uncharacterized protein from Methanocaldococcus jannaschii (strain ATCC 43067 / DSM 2661 / JAL-1 / JCM 10045 / NBRC 100440) (Methanococcus jannaschii).